We begin with the raw amino-acid sequence, 79 residues long: DNA-directed RNA polymerase subunit omega (79 aa).

This sequence belongs to the RNA polymerase subunit omega family. The RNAP catalytic core consists of 2 alpha, 1 beta, 1 beta' and 1 omega subunit. When a sigma factor is associated with the core the holoenzyme is formed, which can initiate transcription.

The enzyme catalyses RNA(n) + a ribonucleoside 5'-triphosphate = RNA(n+1) + diphosphate. Functionally, promotes RNA polymerase assembly. Latches the N- and C-terminal regions of the beta' subunit thereby facilitating its interaction with the beta and alpha subunits. In Bdellovibrio bacteriovorus (strain ATCC 15356 / DSM 50701 / NCIMB 9529 / HD100), this protein is DNA-directed RNA polymerase subunit omega.